A 1071-amino-acid polypeptide reads, in one-letter code: Exportin-1 (1071 aa).

The region spanning 46–112 (AQEVLTHLKE…KKYVVGLIIK (67 aa)) is the Importin N-terminal domain. HEAT repeat units lie at residues 217–240 (QNAP…PLGY), 241–277 (IFET…VSVS), 354–472 (MLLV…YVDT), 515–553 (RFLV…QYPR), 560–597 (KFLK…KCRR), and 602–639 (VQVG…AVGY). The interval 327 to 450 (CTFLKEHGQL…VREFMKDTDS (124 aa)) is necessary for interaction with Ran and nuclear export complex formation. Serine 391 bears the Phosphoserine mark. The tract at residues 411–481 (TVLSKVRLLM…TEIIMTKKLQ (71 aa)) is necessary for interaction with RANBP3. N6-acetyllysine is present on lysine 446. Threonine 448 is subject to Phosphothreonine. Serine 450 is modified (phosphoserine). Tyrosine 454 is modified (phosphotyrosine). Residue lysine 693 is modified to N6-acetyllysine. HEAT repeat units follow at residues 775 to 813 (NFVP…KLGG), 885 to 916 (TMRN…SFYQ), 917 to 954 (TYFC…NLVE), and 1002 to 1039 (FSLN…EERE). Serine 1031 is subject to Phosphoserine.

The protein belongs to the exportin family. As to quaternary structure, found in a U snRNA export complex with PHAX/RNUXA, NCBP1/CBP80, NCBP2/CBP20, RAN, XPO1 and m7G-capped RNA. Component of a nuclear export receptor complex composed of KPNB1, RAN, SNUPN and XPO1. Found in a trimeric export complex with SNUPN, RAN and XPO1. Found in a nuclear export complex with RANBP3 and RAN. Found in a 60S ribosomal subunit export complex with NMD3, RAN, XPO1. Interacts with DDX3X, NMD3, NUP42, NUP88, NUP214, RANBP3 and TERT. Interacts with NEMF (via its N-terminus). Interacts with the monomeric form of BIRC5/survivin deacetylated at 'Lys-129'. Interacts with SERTAD2; the interaction translocates SERTAD2 out of the nucleus. Interacts with ATF2. Interacts with SLC35G1 and STIM1. Interacts with DCAF8. Interacts with DTNBP1 and the interaction translocates DTNBP1 out of the nucleus. Interacts with CPEB3. Interacts with HAX1. Interacts with BOK; translocates to the cytoplasm. Interacts with HSP90AB1. Interacts with LRPPRC; interacts with LRPPRC alone and also when LRPPRC is in complex with EIF4E and with EIF4E sensitivity element (4ESE)-containing mRNAs to form an EIF4E-dependent mRNA export complex.

Its subcellular location is the cytoplasm. It localises to the nucleus. It is found in the nucleoplasm. The protein localises to the cajal body. The protein resides in the nucleolus. Its function is as follows. Mediates the nuclear export of cellular proteins (cargos) bearing a leucine-rich nuclear export signal (NES) and of RNAs. In the nucleus, in association with RANBP3, binds cooperatively to the NES on its target protein and to the GTPase Ran in its active GTP-bound form. Docking of this complex to the nuclear pore complex (NPC) is mediated through binding to nucleoporins. Upon transit of a nuclear export complex into the cytoplasm, disassembling of the complex and hydrolysis of Ran-GTP to Ran-GDP (induced by RANBP1 and RANGAP1, respectively) cause release of the cargo from the export receptor. The directionality of nuclear export is thought to be conferred by an asymmetric distribution of the GTP- and GDP-bound forms of Ran between the cytoplasm and nucleus. Involved in U3 snoRNA transport from Cajal bodies to nucleoli. Binds to late precursor U3 snoRNA bearing a TMG cap. This chain is Exportin-1 (Xpo1), found in Mus musculus (Mouse).